The sequence spans 444 residues: MKSQSKRTSRLFVFVGVVVAIIIAVLSWRYFGTGSDNNTSGAQQSARGQDTSHGGRRNTPLAPVQAATATEQEVPRYLTGLGTVIAANTVTVTSRVDGELMALHFTEGQQVKAGDLLAEIDPRPYEVQLTQAQGQLAKDQATLDNARRDLARYQKLSKTGLISQQELDTQSSLVRQSEGSVKADQGAIDSAKLQLTYSRITAPISGRVGLKQVDVGNYITSGTATPIVVITQTHPVDVVFTLPESDIPAIMQAQKNAEKTHAIVPVEAWDRTNKQMLAQGYLLSIDNQIDTTTGTIKLKARFNNEDDVLFPNQFVNARIKVDLLQNAVVVPTAAVQMGSEGNFVWTLDDANRVSKHLVTTGIQDSQQVVIDAGLNAGQRVVTDGIDRLTEGVQVEVVTPRSANTDTNPASAEKAAAEAEGSTPHQGRGRPANAPARSTTAAEKS.

The first 20 residues, 1–20, serve as a signal peptide directing secretion; sequence MKSQSKRTSRLFVFVGVVVA. The segment covering 37–52 has biased composition (polar residues); sequence NNTSGAQQSARGQDTS. 2 disordered regions span residues 37–60 and 399–444; these read NNTS…RNTP and PRSA…AEKS. The span at 409 to 419 shows a compositional bias: low complexity; sequence ASAEKAAAEAE. Positions 435–444 are enriched in polar residues; it reads ARSTTAAEKS.

This sequence belongs to the membrane fusion protein (MFP) (TC 8.A.1) family. In terms of assembly, part of a tripartite efflux system composed of MdtA, MdtB and MdtC.

The protein localises to the cell inner membrane. The protein is Multidrug resistance protein MdtA of Yersinia pseudotuberculosis serotype I (strain IP32953).